A 189-amino-acid chain; its full sequence is B3 domain-containing protein At2g32645 (189 aa).

The TF-B3 DNA-binding region spans Phe33–Ile133.

It localises to the nucleus. The protein is B3 domain-containing protein At2g32645 of Arabidopsis thaliana (Mouse-ear cress).